The sequence spans 102 residues: Large ribosomal subunit protein bL21 (102 aa).

This sequence belongs to the bacterial ribosomal protein bL21 family. Part of the 50S ribosomal subunit. Contacts protein L20.

This protein binds to 23S rRNA in the presence of protein L20. The polypeptide is Large ribosomal subunit protein bL21 (Nitratidesulfovibrio vulgaris (strain DSM 19637 / Miyazaki F) (Desulfovibrio vulgaris)).